Here is a 261-residue protein sequence, read N- to C-terminus: HTH-type transcriptional repressor CsqR (261 aa).

The HTH deoR-type domain occupies 8–63; that stretch reads GNPRHDQLLMLIAERGYMNIDELANLLDVSTQTVRRDIRKLSEQGLITRHHGGAGR. Positions 25–44 form a DNA-binding region, H-T-H motif; the sequence is MNIDELANLLDVSTQTVRRD.

As to quaternary structure, monomer in the absence of DNA. Exhibits a high level of cooperativity once it is bound to its target DNA.

With respect to regulation, inactivated in the presence of the effectors sulfoquinovose and sulfoquinovosyl glycerol, leading to the de-repression of the target genes. Its function is as follows. Involved in the regulation of the sulfoquinovose operon. Represses the expression of the yihUTS operon and of the yihV and csqR genes. Binds DNA inside the spacer between the bidirectional transcription units comprising the yihUTS operon and the yihV gene, and upstream the csqR gene itself. The chain is HTH-type transcriptional repressor CsqR from Escherichia coli (strain K12).